Consider the following 245-residue polypeptide: Complement C1q subcomponent subunit A (245 aa).

The first 22 residues, 1 to 22 (METSQGWLVACVLAVTLVWTVA), serve as a signal peptide directing secretion. One can recognise a Collagen-like domain in the interval 31–109 (GKDGVAGIPG…KGVKGNPGNI (79 aa)). Residues 35-111 (VAGIPGRPGR…VKGNPGNIRD (77 aa)) are disordered. Pro39 and Pro45 each carry 4-hydroxyproline. A 5-hydroxylysine modification is found at Lys48. Lys48 carries O-linked (Gal...) hydroxylysine glycosylation. Pro54 carries the post-translational modification 4-hydroxyproline. At Lys67 the chain carries 5-hydroxylysine. Lys67 is a glycosylation site (O-linked (Gal...) hydroxylysine). Residues Pro79 and Pro85 each carry the 4-hydroxyproline modification. Lys100 carries the post-translational modification 5-hydroxylysine. A glycan (O-linked (Gal...) hydroxylysine) is linked at Lys100. The 136-residue stretch at 110 to 245 (RDQPRPAFSA…FSGFLIFPSA (136 aa)) folds into the C1q domain. A glycan (N-linked (GlcNAc...) asparagine) is linked at Asn146. Cys172 and Cys190 are disulfide-bonded. Position 199 (Gln199) interacts with Ca(2+).

In terms of assembly, core component of the complement C1 complex, a calcium-dependent complex composed of 1 molecule of the C1Q subcomplex, 2 molecules of C1R and 2 molecules of C1S. The C1Q subcomplex is composed 18 subunits: 3 chains of C1QA, C1QB, and C1QC trimerize to form 6 collagen-like triple helices connected to six globular ligand-recognition modules (C1q domain). Interacts with CR1 (via Sushi 24 and Sushi 25 domains). Interacts (via C-terminus) with CD33; this interaction activates CD33 inhibitory motifs. O-linked glycans are assumed to be the Glc-Gal disaccharides typically found as secondary modifications of hydroxylated lysines in collagen-like domains.

The protein localises to the secreted. The protein resides in the cell surface. The C1Q subcomplex is inhibited by sulfated molecules, such as triterpenoid sulfates, heparan sulfate, or chondroitin sulfates. In terms of biological role, core component of the complement C1 complex, a multiprotein complex that initiates the classical pathway of the complement system, a cascade of proteins that leads to phagocytosis and breakdown of pathogens and signaling that strengthens the adaptive immune system. The classical complement pathway is initiated by the C1Q subcomplex of the C1 complex, which specifically binds IgG or IgM immunoglobulins complexed with antigens, forming antigen-antibody complexes on the surface of pathogens: C1QA, together with C1QB and C1QC, specifically recognizes and binds the Fc regions of IgG or IgM via its C1q domain. Immunoglobulin-binding activates the proenzyme C1R, which cleaves C1S, initiating the proteolytic cascade of the complement system. The C1Q subcomplex is activated by a hexamer of IgG complexed with antigens, while it is activated by a pentameric IgM. The C1Q subcomplex also recognizes and binds phosphatidylserine exposed on the surface of cells undergoing programmed cell death, possibly promoting activation of the complement system. The protein is Complement C1q subcomponent subunit A of Rattus norvegicus (Rat).